The primary structure comprises 129 residues: Large ribosomal subunit protein uL22 (129 aa).

Belongs to the universal ribosomal protein uL22 family. In terms of assembly, part of the 50S ribosomal subunit.

This protein binds specifically to 23S rRNA; its binding is stimulated by other ribosomal proteins, e.g. L4, L17, and L20. It is important during the early stages of 50S assembly. It makes multiple contacts with different domains of the 23S rRNA in the assembled 50S subunit and ribosome. Functionally, the globular domain of the protein is located near the polypeptide exit tunnel on the outside of the subunit, while an extended beta-hairpin is found that lines the wall of the exit tunnel in the center of the 70S ribosome. This chain is Large ribosomal subunit protein uL22, found in Phytoplasma sp. (strain STRAWB2).